The following is a 2473-amino-acid chain: Reducing polyketide synthase grgA (2473 aa).

The Ketosynthase family 3 (KS3) domain maps to 15-446 (REPIAIVGSS…GTNAHAIIES (432 aa)). Active-site for beta-ketoacyl synthase activity residues include C188, H327, and H366. The Malonyl-CoA:ACP transacylase (MAT) domain maps to 559–882 (IFTGQGAQWA…SGVLKRGQNA (324 aa)). The interval 956-1099 (HELLGHSVTH…GGVRLWLGEP (144 aa)) is N-terminal hotdog fold. The interval 956–1260 (HELLGHSVTH…IHLSAVGQRR (305 aa)) is dehydratase (DH) domain. The PKS/mFAS DH domain occupies 956 to 1262 (HELLGHSVTH…LSAVGQRRDP (307 aa)). Catalysis depends on H990, which acts as the Proton acceptor; for dehydratase activity. Residues 1114–1262 (MEALDMEQLY…LSAVGQRRDP (149 aa)) are C-terminal hotdog fold. The Proton donor; for dehydratase activity role is filled by D1172. The tract at residues 1300-1606 (TAYFYLRQLR…PSFCSVIVAQ (307 aa)) is methyltransfrase (MT) domain. A Ketoreductase (KR) domain is found at 2108–2281 (TYLLCGMTGD…AGSVIHIAIL (174 aa)). Residues 2388-2473 (AECLVILESC…LVEWRRLNKS (86 aa)) enclose the Carrier domain. S2426 carries the O-(pantetheine 4'-phosphoryl)serine modification.

Pantetheine 4'-phosphate serves as cofactor.

It participates in secondary metabolite biosynthesis. Its function is as follows. Reducing polyketide synthase; part of the gene cluster that mediates the biosynthesis of gregatin A, a fungal polyketide featuring an alkylated furanone core. The PKS grgA synthesizes C11 and C4 polyketide chains in the presence and absence of the trans-enoyl reductase grgB, respectively. The polyketide transferase grgF is then responsible for the fusion of the two carbon chains to produce the furanone skeleton of gregatin A. Next, the cytochrome P450 monooxygenase grgG accepts performs the oxidative cyclization to furnish the gregatin scaffold and leads to the formation of desmethylgregatin A. Finally, the O-methyltransferase grgD methylates the carboxyl group of desmethylgregatin A to provide gregatin A. The sequence is that of Reducing polyketide synthase grgA from Penicillium sp.